The primary structure comprises 183 residues: Probable GTP-binding protein EngB (183 aa).

The EngB-type G domain occupies 18–183 (DQNEIVFWGR…LSDLVEHFEL (166 aa)). GTP-binding positions include 26-33 (GRSNVGKS), 52-56 (GRTRL), 70-73 (DLPG), 137-140 (TKID), and 166-168 (VSS). 2 residues coordinate Mg(2+): serine 33 and threonine 54.

It belongs to the TRAFAC class TrmE-Era-EngA-EngB-Septin-like GTPase superfamily. EngB GTPase family. The cofactor is Mg(2+).

Necessary for normal cell division and for the maintenance of normal septation. This is Probable GTP-binding protein EngB from Metamycoplasma arthritidis (strain 158L3-1) (Mycoplasma arthritidis).